We begin with the raw amino-acid sequence, 229 residues long: 5'-methylthioadenosine/S-adenosylhomocysteine nucleosidase (229 aa).

Glu-12 functions as the Proton acceptor in the catalytic mechanism. Substrate is bound by residues Gly-78, Ile-152, and 173-174; that span reads ME. Asp-197 serves as the catalytic Proton donor.

This sequence belongs to the PNP/UDP phosphorylase family. MtnN subfamily.

It catalyses the reaction S-adenosyl-L-homocysteine + H2O = S-(5-deoxy-D-ribos-5-yl)-L-homocysteine + adenine. It carries out the reaction S-methyl-5'-thioadenosine + H2O = 5-(methylsulfanyl)-D-ribose + adenine. The catalysed reaction is 5'-deoxyadenosine + H2O = 5-deoxy-D-ribose + adenine. Its pathway is amino-acid biosynthesis; L-methionine biosynthesis via salvage pathway; S-methyl-5-thio-alpha-D-ribose 1-phosphate from S-methyl-5'-thioadenosine (hydrolase route): step 1/2. Catalyzes the irreversible cleavage of the glycosidic bond in both 5'-methylthioadenosine (MTA) and S-adenosylhomocysteine (SAH/AdoHcy) to adenine and the corresponding thioribose, 5'-methylthioribose and S-ribosylhomocysteine, respectively. Also cleaves 5'-deoxyadenosine, a toxic by-product of radical S-adenosylmethionine (SAM) enzymes, into 5-deoxyribose and adenine. This chain is 5'-methylthioadenosine/S-adenosylhomocysteine nucleosidase, found in Histophilus somni (strain 129Pt) (Haemophilus somnus).